The primary structure comprises 152 residues: Deoxyuridine 5'-triphosphate nucleotidohydrolase (152 aa).

Residues 71–73, Asn84, and 88–90 each bind substrate; these read RSG and TVD.

It belongs to the dUTPase family. Mg(2+) is required as a cofactor.

It carries out the reaction dUTP + H2O = dUMP + diphosphate + H(+). It functions in the pathway pyrimidine metabolism; dUMP biosynthesis; dUMP from dCTP (dUTP route): step 2/2. This enzyme is involved in nucleotide metabolism: it produces dUMP, the immediate precursor of thymidine nucleotides and it decreases the intracellular concentration of dUTP so that uracil cannot be incorporated into DNA. The protein is Deoxyuridine 5'-triphosphate nucleotidohydrolase of Maricaulis maris (strain MCS10) (Caulobacter maris).